Here is a 763-residue protein sequence, read N- to C-terminus: Disintegrin and metalloproteinase domain-containing protein 29 (763 aa).

Residues 1–31 (MNMIEALLSMRVLFLTQVFGIFLCFPGLTKA) form the signal peptide. Residues 32–200 (GHLHYHSSIE…ILKQSSFEDW (169 aa)) constitute a propeptide that is removed on maturation. 3 N-linked (GlcNAc...) asparagine glycosylation sites follow: N164, N177, and N223. Topologically, residues 201-684 (WTHTKIVELV…KTNKKKHFFY (484 aa)) are extracellular. In terms of domain architecture, Peptidase M12B spans 205–396 (KIVELVVVVD…NTRCLMENMY (192 aa)). 3 disulfides stabilise this stretch: C313/C390, C353/C375, and C355/C360. N-linked (GlcNAc...) asparagine glycosylation is found at N374, N424, N434, N475, and N584. The Disintegrin domain maps to 403 to 489 (RTRCGNGVVE…ECPDDAYVED (87 aa)). C461 and C481 are oxidised to a cystine. Intrachain disulfides connect C631–C642, C636–C648, and C650–C659. An EGF-like domain is found at 631 to 660 (CTPAFCNYRGICNNKHHCHCNFHWDPPNCM). The chain crosses the membrane as a helical span at residues 685–705 (LLLLQLIILACLLSCLLWLLF). Residues 706–763 (NIKGSKRKPQVQPTPVKTKKVSKKVPSQKPSPVPSPSLPQLRMPSRSASPTSSIKSTN) lie on the Cytoplasmic side of the membrane. Positions 712 to 763 (RKPQVQPTPVKTKKVSKKVPSQKPSPVPSPSLPQLRMPSRSASPTSSIKSTN) are disordered. Residues 751–763 (RSASPTSSIKSTN) are compositionally biased toward polar residues.

It is found in the membrane. May be involved in spermatogenesis and fertilization. Seems to be a non catalytic metalloprotease-like protein. The chain is Disintegrin and metalloproteinase domain-containing protein 29 (Adam29) from Mus musculus (Mouse).